An 843-amino-acid chain; its full sequence is Protein P (843 aa).

A terminal protein domain (TP) region spans residues 1–177 (MPLSYQHFRK…FCGSPYSWEQ (177 aa)). The tract at residues 178–346 (ELQHGRLVFQ…YCLSHIVNLL (169 aa)) is spacer. The interval 347 to 690 (EDWGPCTEHG…YMNLYPVARQ (344 aa)) is polymerase/reverse transcriptase domain (RT). In terms of domain architecture, Reverse transcriptase spans 357–600 (EHHIRIPRTP…YSLNFMGYVI (244 aa)). D429, D551, and D552 together coordinate Mg(2+).

It belongs to the hepadnaviridae P protein family.

The enzyme catalyses DNA(n) + a 2'-deoxyribonucleoside 5'-triphosphate = DNA(n+1) + diphosphate. It catalyses the reaction Endonucleolytic cleavage to 5'-phosphomonoester.. With respect to regulation, activated by host HSP70 and HSP40 in vitro to be able to bind the epsilon loop of the pgRNA. Because deletion of the RNase H region renders the protein partly chaperone-independent, the chaperones may be needed indirectly to relieve occlusion of the RNA-binding site by this domain. Inhibited by several reverse-transcriptase inhibitors: Lamivudine, Adefovir and Entecavir. Its function is as follows. Multifunctional enzyme that converts the viral RNA genome into dsDNA in viral cytoplasmic capsids. This enzyme displays a DNA polymerase activity that can copy either DNA or RNA templates, and a ribonuclease H (RNase H) activity that cleaves the RNA strand of RNA-DNA heteroduplexes in a partially processive 3'- to 5'-endonucleasic mode. Neo-synthesized pregenomic RNA (pgRNA) are encapsidated together with the P protein, and reverse-transcribed inside the nucleocapsid. Initiation of reverse-transcription occurs first by binding the epsilon loop on the pgRNA genome, and is initiated by protein priming, thereby the 5'-end of (-)DNA is covalently linked to P protein. Partial (+)DNA is synthesized from the (-)DNA template and generates the relaxed circular DNA (RC-DNA) genome. After budding and infection, the RC-DNA migrates in the nucleus, and is converted into a plasmid-like covalently closed circular DNA (cccDNA). The activity of P protein does not seem to be necessary for cccDNA generation, and is presumably released from (+)DNA by host nuclear DNA repair machinery. This Homo sapiens (Human) protein is Protein P.